Reading from the N-terminus, the 341-residue chain is Uroporphyrinogen decarboxylase (341 aa).

Substrate is bound by residues 23 to 27 (RQAGR), Asp-73, Tyr-147, Ser-202, and His-318.

This sequence belongs to the uroporphyrinogen decarboxylase family. In terms of assembly, homodimer.

It localises to the cytoplasm. The catalysed reaction is uroporphyrinogen III + 4 H(+) = coproporphyrinogen III + 4 CO2. Its pathway is porphyrin-containing compound metabolism; protoporphyrin-IX biosynthesis; coproporphyrinogen-III from 5-aminolevulinate: step 4/4. Catalyzes the decarboxylation of four acetate groups of uroporphyrinogen-III to yield coproporphyrinogen-III. In Erythrobacter litoralis (strain HTCC2594), this protein is Uroporphyrinogen decarboxylase.